Reading from the N-terminus, the 29-residue chain is Lambda-theraphotoxin-Ec2b (29 aa).

Intrachain disulfides connect Cys2–Cys16, Cys9–Cys21, and Cys15–Cys25.

This sequence belongs to the neurotoxin 30 (phrixotoxin) family. As to expression, expressed by the venom gland.

Its subcellular location is the secreted. Insect-selective neurotoxin that potently blocks insect calcium-activated potassium (BKCa) channels (Slo-type) in cockroach dorsal unpaired median (DUM) neurons (IC(50)=25.3 nM). This occurs in the absence of any shifts in the voltage dependence of activation. May interact with the turret and/or loop region of the external entrance to the channel and does not project deeply into the pore of the channel. In vivo, does not show toxicity in mice after intracerebroventricular injection of up to 25 pmol/g (1.8 ug/20 g mouse). This Eucratoscelus constrictus (African red-rump baboon spider) protein is Lambda-theraphotoxin-Ec2b.